A 245-amino-acid chain; its full sequence is NAD-dependent protein deacetylase (245 aa).

In terms of domain architecture, Deacetylase sirtuin-type spans 1 to 245 (MLLLDKINEL…SIGKVLETVI (245 aa)). A26, T30, F37, R38, Q107, I109, D110, and H125 together coordinate NAD(+). F37 contacts nicotinamide. Nicotinamide-binding residues include I109 and D110. Catalysis depends on H125, which acts as the Proton acceptor. Zn(2+) is bound by residues C133, C136, C155, and C158. The NAD(+) site is built by T196, S197, N219, and I237.

This sequence belongs to the sirtuin family. Class U subfamily. Zn(2+) serves as cofactor.

The protein resides in the cytoplasm. It catalyses the reaction N(6)-acetyl-L-lysyl-[protein] + NAD(+) + H2O = 2''-O-acetyl-ADP-D-ribose + nicotinamide + L-lysyl-[protein]. NAD-dependent protein deacetylase which modulates the activities of several enzymes which are inactive in their acetylated form. The protein is NAD-dependent protein deacetylase of Clostridium acetobutylicum (strain ATCC 824 / DSM 792 / JCM 1419 / IAM 19013 / LMG 5710 / NBRC 13948 / NRRL B-527 / VKM B-1787 / 2291 / W).